A 290-amino-acid polypeptide reads, in one-letter code: 33 kDa chaperonin (290 aa).

Intrachain disulfides connect cysteine 231-cysteine 233 and cysteine 264-cysteine 267.

It belongs to the HSP33 family. Post-translationally, under oxidizing conditions two disulfide bonds are formed involving the reactive cysteines. Under reducing conditions zinc is bound to the reactive cysteines and the protein is inactive.

It is found in the cytoplasm. In terms of biological role, redox regulated molecular chaperone. Protects both thermally unfolding and oxidatively damaged proteins from irreversible aggregation. Plays an important role in the bacterial defense system toward oxidative stress. This chain is 33 kDa chaperonin, found in Photorhabdus laumondii subsp. laumondii (strain DSM 15139 / CIP 105565 / TT01) (Photorhabdus luminescens subsp. laumondii).